A 301-amino-acid polypeptide reads, in one-letter code: Lipoyl synthase (301 aa).

7 residues coordinate [4Fe-4S] cluster: Cys-53, Cys-58, Cys-64, Cys-79, Cys-83, Cys-86, and Ser-290. In terms of domain architecture, Radical SAM core spans 65 to 279 (WSRKTATYML…RIYGKSIGFK (215 aa)).

Belongs to the radical SAM superfamily. Lipoyl synthase family. [4Fe-4S] cluster serves as cofactor.

It localises to the cytoplasm. The catalysed reaction is [[Fe-S] cluster scaffold protein carrying a second [4Fe-4S](2+) cluster] + N(6)-octanoyl-L-lysyl-[protein] + 2 oxidized [2Fe-2S]-[ferredoxin] + 2 S-adenosyl-L-methionine + 4 H(+) = [[Fe-S] cluster scaffold protein] + N(6)-[(R)-dihydrolipoyl]-L-lysyl-[protein] + 4 Fe(3+) + 2 hydrogen sulfide + 2 5'-deoxyadenosine + 2 L-methionine + 2 reduced [2Fe-2S]-[ferredoxin]. The protein operates within protein modification; protein lipoylation via endogenous pathway; protein N(6)-(lipoyl)lysine from octanoyl-[acyl-carrier-protein]: step 2/2. Functionally, catalyzes the radical-mediated insertion of two sulfur atoms into the C-6 and C-8 positions of the octanoyl moiety bound to the lipoyl domains of lipoate-dependent enzymes, thereby converting the octanoylated domains into lipoylated derivatives. This is Lipoyl synthase from Leptospira interrogans serogroup Icterohaemorrhagiae serovar copenhageni (strain Fiocruz L1-130).